The chain runs to 339 residues: Terpene synthase 7 (339 aa).

The DDxx(x)D/E motif motif lies at 79 to 84 (DDFLES). An NDxxSxxxD/E motif motif is present at residues 219–227 (NDCASYAKE).

Belongs to the terpene synthase family.

It catalyses the reaction (2E,6E)-farnesyl diphosphate = (-)-beta-barbatene + diphosphate. In terms of biological role, terpene synthase that converts its substrate farnesyl diphosphate (FPP) into the sesquiterpene beta-barbatene. The sequence is that of Terpene synthase 7 from Dictyostelium discoideum (Social amoeba).